The sequence spans 184 residues: dCTP deaminase (184 aa).

DCTP-binding positions include 107–112, 131–133, Gln152, Tyr166, and Gln176; these read KSTYAR and TLE. The Proton donor/acceptor role is filled by Glu133.

It belongs to the dCTP deaminase family. Homotrimer.

It carries out the reaction dCTP + H2O + H(+) = dUTP + NH4(+). The protein operates within pyrimidine metabolism; dUMP biosynthesis; dUMP from dCTP (dUTP route): step 1/2. Functionally, catalyzes the deamination of dCTP to dUTP. The chain is dCTP deaminase from Rhodospirillum centenum (strain ATCC 51521 / SW).